Reading from the N-terminus, the 370-residue chain is 4-hydroxy-3-methylbut-2-en-1-yl diphosphate synthase (flavodoxin) (370 aa).

4 residues coordinate [4Fe-4S] cluster: Cys-270, Cys-273, Cys-305, and Glu-312.

It belongs to the IspG family. The cofactor is [4Fe-4S] cluster.

The enzyme catalyses (2E)-4-hydroxy-3-methylbut-2-enyl diphosphate + oxidized [flavodoxin] + H2O + 2 H(+) = 2-C-methyl-D-erythritol 2,4-cyclic diphosphate + reduced [flavodoxin]. It functions in the pathway isoprenoid biosynthesis; isopentenyl diphosphate biosynthesis via DXP pathway; isopentenyl diphosphate from 1-deoxy-D-xylulose 5-phosphate: step 5/6. Functionally, converts 2C-methyl-D-erythritol 2,4-cyclodiphosphate (ME-2,4cPP) into 1-hydroxy-2-methyl-2-(E)-butenyl 4-diphosphate. The sequence is that of 4-hydroxy-3-methylbut-2-en-1-yl diphosphate synthase (flavodoxin) from Hahella chejuensis (strain KCTC 2396).